Consider the following 1082-residue polypeptide: Error-prone DNA polymerase (1082 aa).

It belongs to the DNA polymerase type-C family. DnaE2 subfamily.

It is found in the cytoplasm. It catalyses the reaction DNA(n) + a 2'-deoxyribonucleoside 5'-triphosphate = DNA(n+1) + diphosphate. Its function is as follows. DNA polymerase involved in damage-induced mutagenesis and translesion synthesis (TLS). It is not the major replicative DNA polymerase. The chain is Error-prone DNA polymerase from Xanthomonas campestris pv. campestris (strain B100).